We begin with the raw amino-acid sequence, 643 residues long: 1-deoxy-D-xylulose-5-phosphate synthase (643 aa).

Thiamine diphosphate is bound by residues His-78 and 119–121 (AHS). Asp-150 serves as a coordination point for Mg(2+). Residues 151-152 (GS), Asn-179, Tyr-288, and Glu-370 contribute to the thiamine diphosphate site. Asn-179 serves as a coordination point for Mg(2+).

This sequence belongs to the transketolase family. DXPS subfamily. As to quaternary structure, homodimer. The cofactor is Mg(2+). It depends on thiamine diphosphate as a cofactor.

It catalyses the reaction D-glyceraldehyde 3-phosphate + pyruvate + H(+) = 1-deoxy-D-xylulose 5-phosphate + CO2. The protein operates within metabolic intermediate biosynthesis; 1-deoxy-D-xylulose 5-phosphate biosynthesis; 1-deoxy-D-xylulose 5-phosphate from D-glyceraldehyde 3-phosphate and pyruvate: step 1/1. Catalyzes the acyloin condensation reaction between C atoms 2 and 3 of pyruvate and glyceraldehyde 3-phosphate to yield 1-deoxy-D-xylulose-5-phosphate (DXP). The polypeptide is 1-deoxy-D-xylulose-5-phosphate synthase (Brucella suis (strain ATCC 23445 / NCTC 10510)).